We begin with the raw amino-acid sequence, 418 residues long: Nuclear hormone receptor family member nhr-209 (418 aa).

The nuclear receptor DNA-binding region spans 43–121 (PEKCAVCKNA…VGMDSTAIRA (79 aa)). NR C4-type zinc fingers lie at residues 46–66 (CAVCKNAAIGYHYNVPSCNGC) and 82–104 (CMNHKNCLDEIESDESQRLCKGC). The 241-residue stretch at 174–414 (TIPDGFEDMR…SHPPKSLFDE (241 aa)) folds into the NR LBD domain. The interval 403-414 (ECSHPPKSLFDE) is AF-2.

Belongs to the nuclear hormone receptor family.

It localises to the nucleus. Its function is as follows. Transcriptional regulator. Plays a role in modulation of lifespan and immunity. This is Nuclear hormone receptor family member nhr-209 from Caenorhabditis elegans.